We begin with the raw amino-acid sequence, 389 residues long: Transcription factor TGAL10 (389 aa).

The interval 80–110 (DDQDNAAALQESPRHASDSFEQEASKPRDKI) is disordered. Over residues 91-110 (SPRHASDSFEQEASKPRDKI) the composition is skewed to basic and acidic residues. The region spanning 107–151 (RDKIQRRLAQNREAARKSRLRKKAYIQNLETSRMKLAHLEQEITR) is the bZIP domain. The tract at residues 109–129 (KIQRRLAQNREAARKSRLRKK) is basic motif. Residues 135 to 149 (LETSRMKLAHLEQEI) form a leucine-zipper region. A DOG1 domain is found at 176 to 389 (VVTFEVEYAQ…LHVRRRAELG (214 aa)). 2 disordered regions span residues 320-345 (TSCD…GDGG) and 370-389 (HRRS…AELG). Basic residues predominate over residues 380–389 (LHVRRRAELG).

The protein belongs to the bZIP family.

It localises to the nucleus. Functionally, transcriptional regulator involved in defense response. This Oryza sativa subsp. japonica (Rice) protein is Transcription factor TGAL10.